The primary structure comprises 645 residues: Acetyl-coenzyme A synthetase (645 aa).

Residues arginine 190–arginine 193 and threonine 308 contribute to the CoA site. ATP contacts are provided by residues glycine 384 to proline 386, aspartate 408 to threonine 413, aspartate 497, and arginine 512. Serine 520 is a binding site for CoA. Position 523 (arginine 523) interacts with ATP. The Mg(2+) site is built by valine 534, histidine 536, and valine 539. N6-acetyllysine is present on lysine 606.

It belongs to the ATP-dependent AMP-binding enzyme family. Mg(2+) serves as cofactor. In terms of processing, acetylated. Deacetylation by the SIR2-homolog deacetylase activates the enzyme.

The catalysed reaction is acetate + ATP + CoA = acetyl-CoA + AMP + diphosphate. Catalyzes the conversion of acetate into acetyl-CoA (AcCoA), an essential intermediate at the junction of anabolic and catabolic pathways. AcsA undergoes a two-step reaction. In the first half reaction, AcsA combines acetate with ATP to form acetyl-adenylate (AcAMP) intermediate. In the second half reaction, it can then transfer the acetyl group from AcAMP to the sulfhydryl group of CoA, forming the product AcCoA. This chain is Acetyl-coenzyme A synthetase, found in Halorhodospira halophila (strain DSM 244 / SL1) (Ectothiorhodospira halophila (strain DSM 244 / SL1)).